The chain runs to 366 residues: Peptide chain release factor 2 (366 aa).

Q249 carries the N5-methylglutamine modification.

Belongs to the prokaryotic/mitochondrial release factor family. Post-translationally, methylated by PrmC. Methylation increases the termination efficiency of RF2.

The protein localises to the cytoplasm. Peptide chain release factor 2 directs the termination of translation in response to the peptide chain termination codons UGA and UAA. The polypeptide is Peptide chain release factor 2 (Petrotoga mobilis (strain DSM 10674 / SJ95)).